Here is a 172-residue protein sequence, read N- to C-terminus: UBA-like domain-containing protein 2 (172 aa).

Over residues proline 118–serine 130 the composition is skewed to pro residues. Residues proline 118–arginine 172 are disordered. The span at histidine 135–histidine 145 shows a compositional bias: basic residues.

Belongs to the UBALD family.

The protein is UBA-like domain-containing protein 2 (ubald2) of Danio rerio (Zebrafish).